The sequence spans 205 residues: ATP synthase subunit b (205 aa).

A helical transmembrane segment spans residues 45–65 (LGMTATAWVSLAMVIVILLLL).

It belongs to the ATPase B chain family. In terms of assembly, F-type ATPases have 2 components, F(1) - the catalytic core - and F(0) - the membrane proton channel. F(1) has five subunits: alpha(3), beta(3), gamma(1), delta(1), epsilon(1). F(0) has three main subunits: a(1), b(2) and c(10-14). The alpha and beta chains form an alternating ring which encloses part of the gamma chain. F(1) is attached to F(0) by a central stalk formed by the gamma and epsilon chains, while a peripheral stalk is formed by the delta and b chains.

The protein resides in the cell inner membrane. In terms of biological role, f(1)F(0) ATP synthase produces ATP from ADP in the presence of a proton or sodium gradient. F-type ATPases consist of two structural domains, F(1) containing the extramembraneous catalytic core and F(0) containing the membrane proton channel, linked together by a central stalk and a peripheral stalk. During catalysis, ATP synthesis in the catalytic domain of F(1) is coupled via a rotary mechanism of the central stalk subunits to proton translocation. Component of the F(0) channel, it forms part of the peripheral stalk, linking F(1) to F(0). The sequence is that of ATP synthase subunit b from Rhizorhabdus wittichii (strain DSM 6014 / CCUG 31198 / JCM 15750 / NBRC 105917 / EY 4224 / RW1) (Sphingomonas wittichii).